A 33-amino-acid polypeptide reads, in one-letter code: MKKLAVILTLVGGLYYAFKKYQERVNQAPNIEY.

This is an uncharacterized protein from Staphylococcus aureus (strain N315).